Consider the following 308-residue polypeptide: Aspartate carbamoyltransferase catalytic subunit (308 aa).

Carbamoyl phosphate contacts are provided by Arg-59 and Thr-60. Lys-87 serves as a coordination point for L-aspartate. Arg-109, His-137, and Gln-140 together coordinate carbamoyl phosphate. Positions 173 and 224 each coordinate L-aspartate. 2 residues coordinate carbamoyl phosphate: Gly-267 and Pro-268.

Belongs to the aspartate/ornithine carbamoyltransferase superfamily. ATCase family. As to quaternary structure, heterododecamer (2C3:3R2) of six catalytic PyrB chains organized as two trimers (C3), and six regulatory PyrI chains organized as three dimers (R2).

The catalysed reaction is carbamoyl phosphate + L-aspartate = N-carbamoyl-L-aspartate + phosphate + H(+). The protein operates within pyrimidine metabolism; UMP biosynthesis via de novo pathway; (S)-dihydroorotate from bicarbonate: step 2/3. In terms of biological role, catalyzes the condensation of carbamoyl phosphate and aspartate to form carbamoyl aspartate and inorganic phosphate, the committed step in the de novo pyrimidine nucleotide biosynthesis pathway. The chain is Aspartate carbamoyltransferase catalytic subunit from Helicobacter acinonychis (strain Sheeba).